A 681-amino-acid polypeptide reads, in one-letter code: Macrolide export ATP-binding/permease protein MacB (681 aa).

The region spanning 6-244 (LKLAAVTRRF…FAEVGVGAAA (239 aa)) is the ABC transporter domain. Residue 42–49 (GASGSGKS) coordinates ATP. The interval 246-274 (TETAADTRSAPASGDAPPPANNDTAADPA) is disordered. 4 consecutive transmembrane segments (helical) span residues 306-326 (LLTM…VAVG), 554-574 (LTLL…IGVM), 611-631 (LVCL…GALF), and 644-664 (AGAI…FGFM).

It belongs to the ABC transporter superfamily. Macrolide exporter (TC 3.A.1.122) family. As to quaternary structure, homodimer.

It is found in the cell inner membrane. Non-canonical ABC transporter that contains transmembrane domains (TMD), which form a pore in the inner membrane, and an ATP-binding domain (NBD), which is responsible for energy generation. Confers resistance against macrolides. This is Macrolide export ATP-binding/permease protein MacB from Burkholderia cenocepacia (strain HI2424).